We begin with the raw amino-acid sequence, 337 residues long: Ornithine carbamoyltransferase (337 aa).

Residues 57 to 60, Gln84, Arg108, and 135 to 138 each bind carbamoyl phosphate; these read STRT and HPTQ. Residues Asn167, Asp231, and 235–236 each bind L-ornithine; that span reads SM. Carbamoyl phosphate-binding positions include 272 to 273 and Arg317; that span reads CL.

This sequence belongs to the aspartate/ornithine carbamoyltransferase superfamily. OTCase family.

The protein resides in the cytoplasm. It carries out the reaction carbamoyl phosphate + L-ornithine = L-citrulline + phosphate + H(+). The protein operates within amino-acid degradation; L-arginine degradation via ADI pathway; carbamoyl phosphate from L-arginine: step 2/2. Its function is as follows. Reversibly catalyzes the transfer of the carbamoyl group from carbamoyl phosphate (CP) to the N(epsilon) atom of ornithine (ORN) to produce L-citrulline. The chain is Ornithine carbamoyltransferase from Streptococcus equi subsp. zooepidemicus (strain MGCS10565).